The sequence spans 209 residues: Orotate phosphoribosyltransferase (209 aa).

Residues Arg96, Lys100, His102, and Glu122 to Ser130 each bind 5-phospho-alpha-D-ribose 1-diphosphate. Ser126 contributes to the orotate binding site.

It belongs to the purine/pyrimidine phosphoribosyltransferase family. PyrE subfamily. As to quaternary structure, homodimer. The cofactor is Mg(2+).

It catalyses the reaction orotidine 5'-phosphate + diphosphate = orotate + 5-phospho-alpha-D-ribose 1-diphosphate. The protein operates within pyrimidine metabolism; UMP biosynthesis via de novo pathway; UMP from orotate: step 1/2. In terms of biological role, catalyzes the transfer of a ribosyl phosphate group from 5-phosphoribose 1-diphosphate to orotate, leading to the formation of orotidine monophosphate (OMP). In Streptococcus pyogenes serotype M2 (strain MGAS10270), this protein is Orotate phosphoribosyltransferase.